The primary structure comprises 448 residues: tRNA modification GTPase MnmE (448 aa).

Residues R25, E82, and K121 each contribute to the (6S)-5-formyl-5,6,7,8-tetrahydrofolate site. Residues 217–372 (GLTTVIAGRP…LRQEIIRRAG (156 aa)) enclose the TrmE-type G domain. N227 lines the K(+) pocket. GTP is bound by residues 227-232 (NVGKSS), 246-252 (TEIPGTT), 271-274 (DTAG), and 353-355 (SAR). Position 231 (S231) interacts with Mg(2+). Residues T246, I248, and T251 each coordinate K(+). Residue T252 participates in Mg(2+) binding. K448 serves as a coordination point for (6S)-5-formyl-5,6,7,8-tetrahydrofolate.

Belongs to the TRAFAC class TrmE-Era-EngA-EngB-Septin-like GTPase superfamily. TrmE GTPase family. In terms of assembly, homodimer. Heterotetramer of two MnmE and two MnmG subunits. Requires K(+) as cofactor.

The protein localises to the cytoplasm. In terms of biological role, exhibits a very high intrinsic GTPase hydrolysis rate. Involved in the addition of a carboxymethylaminomethyl (cmnm) group at the wobble position (U34) of certain tRNAs, forming tRNA-cmnm(5)s(2)U34. This Methylococcus capsulatus (strain ATCC 33009 / NCIMB 11132 / Bath) protein is tRNA modification GTPase MnmE.